The following is a 1549-amino-acid chain: VPS10 homolog 1 (1549 aa).

An N-terminal signal peptide occupies residues 1–21 (MALFRALYIIWVFLLIPLSNA). Residues 22 to 1369 (EEFTPKVTRT…AFREKYSINT (1348 aa)) are Lumenal-facing. BNR repeat units lie at residues 57–68 (EISFDAGENWKT), 101–112 (YVTDDQGKSWRP), 159–170 (IYTTNDGVSFSQ), 228–239 (ILSADGGETFKE), 393–404 (KVSVDNGLTWTN), and 465–476 (FISRDSGLTWRL). N-linked (GlcNAc...) asparagine glycosylation is present at N479. BNR repeat units follow at residues 511–522 (YYSLDQGKTWGE) and 740–751 (YISHDGGQTIKR). N769 is a glycosylation site (N-linked (GlcNAc...) asparagine). Residues 837-848 (YLTKDGGETFTE) form a BNR 9 repeat. N-linked (GlcNAc...) asparagine glycosylation is present at N986. 3 BNR repeats span residues 1040-1051 (KITFNDGSDWNF), 1119-1130 (FLTTDGGETWTE), and 1160-1171 (SYSTDFGKTWKD). A helical transmembrane segment spans residues 1370 to 1390 (GAYALVFVTILLVIFFVAWFV). At 1391–1549 (YDRGIRRNGG…DLAAARSEDK (159 aa)) the chain is on the cytoplasmic side. The disordered stretch occupies residues 1479-1549 (EPDGFHEDSN…DLAAARSEDK (71 aa)). Residues 1489–1501 (DLSSFRGQGSNSE) are compositionally biased toward polar residues. A compositionally biased stretch (basic and acidic residues) spans 1535–1549 (ASHESDLAAARSEDK).

The protein belongs to the VPS10-related sortilin family.

The protein localises to the golgi apparatus. It is found in the trans-Golgi network membrane. Its subcellular location is the endosome membrane. Its function is as follows. Functions as a sorting receptor in the Golgi compartment required for the intracellular sorting and delivery of soluble vacuolar proteins, like carboxypeptidase Y (CPY) and proteinase A. This is VPS10 homolog 1 (VTH1) from Saccharomyces cerevisiae (strain ATCC 204508 / S288c) (Baker's yeast).